A 153-amino-acid polypeptide reads, in one-letter code: Regulator of sigma D (153 aa).

Belongs to the Rsd/AlgQ family. In terms of assembly, interacts with RpoD.

Its subcellular location is the cytoplasm. In terms of biological role, binds RpoD and negatively regulates RpoD-mediated transcription activation by preventing the interaction between the primary sigma factor RpoD with the catalytic core of the RNA polymerase and with promoter DNA. May be involved in replacement of the RNA polymerase sigma subunit from RpoD to RpoS during the transition from exponential growth to the stationary phase. The protein is Regulator of sigma D of Pectobacterium carotovorum subsp. carotovorum (strain PC1).